The following is a 229-amino-acid chain: Nectarin-1 (229 aa).

An N-terminal signal peptide occupies residues 1–32; it reads MAAFGINSKIFQSMEMAILFLLAISIDRYCFA. Cys-42 and Cys-57 form a disulfide bridge. Residue Asn-60 is glycosylated (N-linked (GlcNAc...) asparagine). The 149-residue stretch at 69-217 folds into the Cupin type-1 domain; the sequence is LAISKPGATN…TFQINTEDVQ (149 aa). Mn(2+) is bound by residues His-117, His-119, Glu-124, and His-163.

In terms of assembly, monomer. In the absence of manganese, it forms tetrameric and pentameric forms which show superoxide dismutase activity. Mn(2+) serves as cofactor. Nectary tissues and to a lower level ovary. Not detected in petals, stems, leaves, roots or other floral tissues.

The protein resides in the secreted. The protein localises to the extracellular space. It is found in the apoplast. The enzyme catalyses 2 superoxide + 2 H(+) = H2O2 + O2. Functionally, may interact with bacterial adhesins thereby protecting the reproductive tissues from microbial attack. Has no oxalate oxidase activity. In Nicotiana langsdorffii x Nicotiana sanderae (Ornamental tobacco), this protein is Nectarin-1 (NECI).